A 101-amino-acid polypeptide reads, in one-letter code: NADH-quinone oxidoreductase subunit K (101 aa).

The next 3 helical transmembrane spans lie at 4 to 24 (LGHL…GIFL), 30 to 50 (IVLL…FIAF), and 62 to 82 (FVFF…AILV).

It belongs to the complex I subunit 4L family. As to quaternary structure, NDH-1 is composed of 14 different subunits. Subunits NuoA, H, J, K, L, M, N constitute the membrane sector of the complex.

It is found in the cell inner membrane. The catalysed reaction is a quinone + NADH + 5 H(+)(in) = a quinol + NAD(+) + 4 H(+)(out). In terms of biological role, NDH-1 shuttles electrons from NADH, via FMN and iron-sulfur (Fe-S) centers, to quinones in the respiratory chain. The immediate electron acceptor for the enzyme in this species is believed to be ubiquinone. Couples the redox reaction to proton translocation (for every two electrons transferred, four hydrogen ions are translocated across the cytoplasmic membrane), and thus conserves the redox energy in a proton gradient. In Xylella fastidiosa (strain Temecula1 / ATCC 700964), this protein is NADH-quinone oxidoreductase subunit K.